A 1167-amino-acid chain; its full sequence is ATP-dependent helicase/nuclease subunit A (1167 aa).

The UvrD-like helicase ATP-binding domain maps to 2–451 (KNWTAEQMRA…IELSLNFRSR (450 aa)). Residue 23-30 (AAAGAGKT) participates in ATP binding. Positions 478–768 (KAFLKKGADY…RVMSVHKSKG (291 aa)) constitute a UvrD-like helicase C-terminal domain.

It belongs to the helicase family. AddA subfamily. Heterodimer of AddA and AddB/RexB. It depends on Mg(2+) as a cofactor.

It catalyses the reaction Couples ATP hydrolysis with the unwinding of duplex DNA by translocating in the 3'-5' direction.. It carries out the reaction ATP + H2O = ADP + phosphate + H(+). The heterodimer acts as both an ATP-dependent DNA helicase and an ATP-dependent, dual-direction single-stranded exonuclease. Recognizes the chi site generating a DNA molecule suitable for the initiation of homologous recombination. The AddA nuclease domain is required for chi fragment generation; this subunit has the helicase and 3' -&gt; 5' nuclease activities. This Carboxydothermus hydrogenoformans (strain ATCC BAA-161 / DSM 6008 / Z-2901) protein is ATP-dependent helicase/nuclease subunit A.